Here is a 300-residue protein sequence, read N- to C-terminus: Protein FANTASTIC FOUR 4 (300 aa).

Positions 30-56 are enriched in polar residues; sequence PQLSTPLKSHFQNSSIAPQDNPITINA. 3 disordered regions span residues 30-104, 142-170, and 227-264; these read PQLS…SPSS, TMET…LPPP, and TETK…KEEE. 2 stretches are compositionally biased toward low complexity: residues 58–88 and 142–151; these read SLPS…NSSS and TMETRTTSTT. An FAF domain is found at 166–217; the sequence is SLPPPLTSMIGFDCIEVKSHRENGRLVMMATRPPPRNRCLQDRSNGCVRLAI. Acidic residues predominate over residues 233–262; that stretch reads KEEEEEETIETVRDNEEEIPEYKEEEEEKE.

Belongs to the fantastic four family. As to expression, expressed in the shoot apex and young siliques. Detected in provascular and vascular tissue, but not in the vegetative meristem. In inflorescences, restricted to the base of the flower and to the vasculature of the stem and the pedicels, but absent from young flowers. Detected in the center of the inflorescence meristem.

Regulates the size of the shoot meristem by modulating the CLV3-WUS feedback loop. Can repress WUS but is under negative control by CLV3. This is Protein FANTASTIC FOUR 4 (FAF4) from Arabidopsis thaliana (Mouse-ear cress).